Consider the following 424-residue polypeptide: Histidine--tRNA ligase (424 aa).

Belongs to the class-II aminoacyl-tRNA synthetase family. As to quaternary structure, homodimer.

Its subcellular location is the cytoplasm. It carries out the reaction tRNA(His) + L-histidine + ATP = L-histidyl-tRNA(His) + AMP + diphosphate + H(+). The protein is Histidine--tRNA ligase of Edwardsiella ictaluri (strain 93-146).